The chain runs to 337 residues: Peroxisome biogenesis factor 10 (337 aa).

Residues 1–24 (MKNDNKLQKEALMRLSQLRFPFAD) are Peroxisomal matrix-facing. A helical transmembrane segment spans residues 25–54 (APSIVQAHQKDEQIQGLLIMKVTELCKLIK). S55 is a topological domain (cytoplasmic). Residues 56-77 (QLFVNSYPKELSIFAKLLYLLF) traverse the membrane as a helical segment. At 78–105 (TTGRRGRTLGEEYVDLTYTNRKGTRLAG) the chain is on the peroxisomal matrix side. Residues 106–138 (RLKMIVFAFAYPLCPYFITKLYKKIMKNNKESK) form a helical membrane-spanning segment. At 139–145 (IEDTESV) the chain is on the cytoplasmic side. Residues 146–166 (AAFCKGLLDFILDVHMTLFYF) traverse the membrane as a helical segment. The Peroxisomal matrix segment spans residues 167–202 (KGAFYSISKRIFGMRYVFKHILSKNEANFREEGSQK). A helical transmembrane segment spans residues 203 to 222 (YKVLGYILLAQNVMKWYPVL). Over 223–337 (TSTLGSWIYG…QPQEILVLRQ (115 aa)) the chain is Cytoplasmic. Residues C286, C289, C301, H303, C306, C309, C320, and C323 each coordinate Zn(2+). The segment at 286–327 (CILCLMNMSDPSCAPCGHLFCWSCLMSWCKERPECPLCRQHC) adopts an RING-type zinc-finger fold.

The protein belongs to the pex2/pex10/pex12 family. In terms of assembly, component of the PEX2-PEX10-PEX12 retrotranslocation channel, composed of PEX2, PEX10 and PEX12.

It localises to the peroxisome membrane. It catalyses the reaction S-ubiquitinyl-[E2 ubiquitin-conjugating enzyme]-L-cysteine + [acceptor protein]-L-lysine = [E2 ubiquitin-conjugating enzyme]-L-cysteine + N(6)-ubiquitinyl-[acceptor protein]-L-lysine.. Its pathway is protein modification; protein ubiquitination. The E3 ubiquitin-protein ligase activity is stimulated by PEX12. In terms of biological role, E3 ubiquitin-protein ligase component of a retrotranslocation channel required for peroxisome organization by mediating export of the PEX5 receptor from peroxisomes to the cytosol, thereby promoting PEX5 recycling. The retrotranslocation channel is composed of PEX2, PEX10 and PEX12; each subunit contributing transmembrane segments that coassemble into an open channel that specifically allows the passage of PEX5 through the peroxisomal membrane. PEX10 also regulates PEX5 recycling by acting as a E3 ubiquitin-protein ligase. When PEX5 recycling is compromised, PEX10 catalyzes polyubiquitination of PEX5 during its passage through the retrotranslocation channel, leading to its degradation. The polypeptide is Peroxisome biogenesis factor 10 (Saccharomyces cerevisiae (strain ATCC 204508 / S288c) (Baker's yeast)).